The chain runs to 85 residues: Large ribosomal subunit protein bL27 (85 aa).

The disordered stretch occupies residues 1–21 (MAHKKAGGSTRNGRDSNAQRL). A compositionally biased stretch (polar residues) spans 9–19 (STRNGRDSNAQ).

It belongs to the bacterial ribosomal protein bL27 family.

The chain is Large ribosomal subunit protein bL27 from Pectobacterium atrosepticum (strain SCRI 1043 / ATCC BAA-672) (Erwinia carotovora subsp. atroseptica).